The primary structure comprises 391 residues: Candidapepsin-1 (391 aa).

Positions 1 to 18 (MFLKNIFIALAIALLVDA) are cleaved as a signal peptide. Positions 19-50 (SPAKRSPGFVTLDFDVIKTPVNATGQEGKVKR) are cleaved as a propeptide — activation peptide. Asn40 carries N-linked (GlcNAc...) asparagine glycosylation. The 314-residue stretch at 64–377 (YAADITIGSN…DLDDDKISLA (314 aa)) folds into the Peptidase A1 domain. Asp82 is a catalytic residue. An intrachain disulfide couples Cys97 to Cys109. Asp267 is an active-site residue. Cys305 and Cys343 are joined by a disulfide.

Belongs to the peptidase A1 family. Post-translationally, O-glycosylated.

The protein localises to the secreted. The enzyme catalyses Preferential cleavage at the carboxyl of hydrophobic amino acids, but fails to cleave 15-Leu-|-Tyr-16, 16-Tyr-|-Leu-17 and 24-Phe-|-Phe-25 of insulin B chain. Activates trypsinogen, and degrades keratin.. This chain is Candidapepsin-1 (SAP1), found in Candida albicans (strain WO-1) (Yeast).